Here is a 579-residue protein sequence, read N- to C-terminus: Membrane protein insertase YidC (579 aa).

A helical membrane pass occupies residues 10 to 30 (LVIVTILSALILFGWSFVTKH). Residues 35–61 (PPAPTQQGKNQPKAELTAEESGDKPLK) form a disordered region. The next 5 helical transmembrane spans lie at 330–350 (FDKAIDWGWFAIIEKVFFYYL), 351–371 (DWLFLHVGNYGLAIILMVFTI), 423–443 (VNPFAGCLPMFIQFPIFIALY), 478–498 (LLHFTPPHFLMIGVLPIILGI), and 523–543 (PLISVIFMAPLAAGLQVYYIF). Residues 560–572 (STPEERQDRAERK) show a composition bias toward basic and acidic residues. The interval 560 to 579 (STPEERQDRAERKRPSKKKA) is disordered.

Belongs to the OXA1/ALB3/YidC family. Type 1 subfamily. As to quaternary structure, interacts with the Sec translocase complex via SecD. Specifically interacts with transmembrane segments of nascent integral membrane proteins during membrane integration.

Its subcellular location is the cell inner membrane. Required for the insertion and/or proper folding and/or complex formation of integral membrane proteins into the membrane. Involved in integration of membrane proteins that insert both dependently and independently of the Sec translocase complex, as well as at least some lipoproteins. Aids folding of multispanning membrane proteins. This Zymomonas mobilis subsp. mobilis (strain ATCC 31821 / ZM4 / CP4) protein is Membrane protein insertase YidC.